Here is a 224-residue protein sequence, read N- to C-terminus: Deoxyribose-phosphate aldolase (224 aa).

Asp92 (proton donor/acceptor) is an active-site residue. The active-site Schiff-base intermediate with acetaldehyde is the Lys155. The active-site Proton donor/acceptor is the Lys184.

This sequence belongs to the DeoC/FbaB aldolase family. DeoC type 1 subfamily.

It localises to the cytoplasm. The enzyme catalyses 2-deoxy-D-ribose 5-phosphate = D-glyceraldehyde 3-phosphate + acetaldehyde. It participates in carbohydrate degradation; 2-deoxy-D-ribose 1-phosphate degradation; D-glyceraldehyde 3-phosphate and acetaldehyde from 2-deoxy-alpha-D-ribose 1-phosphate: step 2/2. Functionally, catalyzes a reversible aldol reaction between acetaldehyde and D-glyceraldehyde 3-phosphate to generate 2-deoxy-D-ribose 5-phosphate. The chain is Deoxyribose-phosphate aldolase from Clostridium perfringens (strain SM101 / Type A).